A 545-amino-acid chain; its full sequence is CTP synthase (545 aa).

The interval 1 to 266 (MTTKYIFVTG…DQLVVDRFGL (266 aa)) is amidoligase domain. Ser-14 lines the CTP pocket. Ser-14 contacts UTP. ATP contacts are provided by residues 15-20 (SLGKGI) and Asp-72. Mg(2+) contacts are provided by Asp-72 and Glu-140. Residues 147–149 (DIE), 187–192 (KTKPTQ), and Lys-223 contribute to the CTP site. UTP is bound by residues 187-192 (KTKPTQ) and Lys-223. Residue 239 to 241 (KDV) participates in ATP binding. The region spanning 291–542 (TIGMVGKYVS…IQAAGEYMKR (252 aa)) is the Glutamine amidotransferase type-1 domain. Gly-352 contributes to the L-glutamine binding site. The active-site Nucleophile; for glutamine hydrolysis is the Cys-379. Residues 380–383 (LGMQ), Glu-403, and Arg-470 each bind L-glutamine. Active-site residues include His-515 and Glu-517.

The protein belongs to the CTP synthase family. In terms of assembly, homotetramer.

The catalysed reaction is UTP + L-glutamine + ATP + H2O = CTP + L-glutamate + ADP + phosphate + 2 H(+). It catalyses the reaction L-glutamine + H2O = L-glutamate + NH4(+). It carries out the reaction UTP + NH4(+) + ATP = CTP + ADP + phosphate + 2 H(+). The protein operates within pyrimidine metabolism; CTP biosynthesis via de novo pathway; CTP from UDP: step 2/2. With respect to regulation, allosterically activated by GTP, when glutamine is the substrate; GTP has no effect on the reaction when ammonia is the substrate. The allosteric effector GTP functions by stabilizing the protein conformation that binds the tetrahedral intermediate(s) formed during glutamine hydrolysis. Inhibited by the product CTP, via allosteric rather than competitive inhibition. Its function is as follows. Catalyzes the ATP-dependent amination of UTP to CTP with either L-glutamine or ammonia as the source of nitrogen. Regulates intracellular CTP levels through interactions with the four ribonucleotide triphosphates. The protein is CTP synthase of Tolumonas auensis (strain DSM 9187 / NBRC 110442 / TA 4).